The chain runs to 166 residues: NAD(P)H-quinone oxidoreductase subunit I, chloroplastic (166 aa).

2 4Fe-4S ferredoxin-type domains span residues 55 to 84 (GRIH…VDWK) and 95 to 124 (LNYS…MTEE). [4Fe-4S] cluster-binding residues include Cys-64, Cys-67, Cys-70, Cys-74, Cys-104, Cys-107, Cys-110, and Cys-114.

It belongs to the complex I 23 kDa subunit family. As to quaternary structure, NDH is composed of at least 16 different subunits, 5 of which are encoded in the nucleus. [4Fe-4S] cluster serves as cofactor.

It is found in the plastid. The protein resides in the chloroplast thylakoid membrane. The catalysed reaction is a plastoquinone + NADH + (n+1) H(+)(in) = a plastoquinol + NAD(+) + n H(+)(out). The enzyme catalyses a plastoquinone + NADPH + (n+1) H(+)(in) = a plastoquinol + NADP(+) + n H(+)(out). In terms of biological role, NDH shuttles electrons from NAD(P)H:plastoquinone, via FMN and iron-sulfur (Fe-S) centers, to quinones in the photosynthetic chain and possibly in a chloroplast respiratory chain. The immediate electron acceptor for the enzyme in this species is believed to be plastoquinone. Couples the redox reaction to proton translocation, and thus conserves the redox energy in a proton gradient. This Guardiola tulocarpus protein is NAD(P)H-quinone oxidoreductase subunit I, chloroplastic.